We begin with the raw amino-acid sequence, 977 residues long: MKIKVTFQERIIEHNFETEITNLQQVTQKLCSLFLITNYYSYSLFLSSGQLVDNINLIDEGSEIIIKHLNRLGTISIGSGYSNSVVGTTNNNAPSSPSSSININGQQIQQQIQQQIQQQQQQQQQQQQQVQLSPDTLINNLLNNLKDNTFKKKAFFDLKDLKEEILIKKFVEKNGIEVIVCQLKELTGNTLSYALSALQTIMSYEFTITSMTSTDTASLITQLLPLTENTSNPSISKTSLSLLCLFLNQSNNLNFKQFSSTLVLEYNEKTKRNYNHTLVQLLSSSNTVDVQLNALTLINIIIGKTMSTTIPGLENGSVTGGENGFNKLLKELDEYEINQKLKKLVESIIVAPELKRQLYIYQRHRFQVITNRKNVTFNKESSEHDALLMKLWSLTYPGVKLESRVSEQWKQMGFQGTDPCTDFRAMGIWGLDNLIYFAQNYNEKFRKIVNSQIDRKEREYPTATAGIVLTFELYNSIFKMGTPNLNPYNSTTSNTTSNTTSTTNIDDLPFFPLFFSHPHAFEEVYCTTFQILDSTWDDMNGTYMHFQKIMSSVKNLIITALESKPTTLEAFDWKCQKNTKNSNGGTNSNQNNSSSNLLLSNFANGSSLLSLLNDLSSSSRDDMKKLLTGVNYQVLDLIKSQKISYFQEGFQFKLHKQLKTKQSLPLNWIFIRLFNNNNNNNNNNENCSYEIQYCFLSTELNQPPLPNQSIPTNYNTIKISDLFFNGESTNSNNKKKDKSLSYFNISIKDEQIQSLIQNQLPLSNLNNSSNSLQLDSSTSMNSIKDSIINISSSNNNIKDNLTNNNTNTNTNNTNNNTSNGNGNSNSVSMSSININNSGQLSPNTTSPILIPQQQQQQPQSSSLSVQHQQSSTPTPSSPVLLSSPSLQSSSSSSSSSSNPNLFTIDLISSNRDDVSNFWDSIKLLSGQEIKSQEGLDDYHSLLSINTSVKLLDLDGIDIPKETPQIPILPDNFDFRTV.

The 179-residue stretch at 383–561 (EHDALLMKLW…SVKNLIITAL (179 aa)) folds into the ELMO domain. Low complexity-rich tracts occupy residues 792–838 (SSNN…NNSG) and 852–897 (QQQQ…SSSS). The disordered stretch occupies residues 792 to 899 (SSNNNIKDNL…SSSSSSSSNP (108 aa)).

As to quaternary structure, associates with mhcA.

In terms of biological role, functions as a negative regulator of actin polymerization. Modulates actin/myosin II at cortex actinomyosins to prevent excessive F-actin polymerization around the cell periphery, thereby maintaining proper cell shape during phagocytosis and chemotaxis. The protein is ELMO domain-containing protein A (elmoA) of Dictyostelium discoideum (Social amoeba).